Here is a 384-residue protein sequence, read N- to C-terminus: Farnesyl pyrophosphate synthase 1, mitochondrial (384 aa).

Residues lysine 89, arginine 92, and glutamine 128 each contribute to the isopentenyl diphosphate site. Mg(2+)-binding residues include aspartate 135 and aspartate 139. Arginine 144 serves as a coordination point for dimethylallyl diphosphate. Position 145 (arginine 145) interacts with isopentenyl diphosphate. Residues lysine 232, threonine 233, glutamine 271, lysine 288, and lysine 297 each contribute to the dimethylallyl diphosphate site.

This sequence belongs to the FPP/GGPP synthase family. It depends on Mg(2+) as a cofactor. In terms of tissue distribution, the FPS1L mRNA accumulates preferentially in inflorescences, whereas the FPS1S mRNA is predominantly expressed in roots and inflorescences.

It localises to the mitochondrion. The protein localises to the cytoplasm. The enzyme catalyses isopentenyl diphosphate + dimethylallyl diphosphate = (2E)-geranyl diphosphate + diphosphate. It catalyses the reaction isopentenyl diphosphate + (2E)-geranyl diphosphate = (2E,6E)-farnesyl diphosphate + diphosphate. It functions in the pathway isoprenoid biosynthesis; farnesyl diphosphate biosynthesis; farnesyl diphosphate from geranyl diphosphate and isopentenyl diphosphate: step 1/1. The protein operates within isoprenoid biosynthesis; geranyl diphosphate biosynthesis; geranyl diphosphate from dimethylallyl diphosphate and isopentenyl diphosphate: step 1/1. Its function is as follows. Catalyzes the sequential condensation of isopentenyl pyrophosphate with the allylic pyrophosphates, dimethylallyl pyrophosphate, and then with the resultant geranylpyrophosphate to the ultimate product farnesyl pyrophosphate. The chain is Farnesyl pyrophosphate synthase 1, mitochondrial (FPS1) from Arabidopsis thaliana (Mouse-ear cress).